Consider the following 130-residue polypeptide: Small ribosomal subunit protein uS9 (130 aa).

The protein belongs to the universal ribosomal protein uS9 family.

This chain is Small ribosomal subunit protein uS9, found in Shewanella sediminis (strain HAW-EB3).